The chain runs to 688 residues: Zinc finger protein 770 (688 aa).

Lys11 participates in a covalent cross-link: Glycyl lysine isopeptide (Lys-Gly) (interchain with G-Cter in SUMO2). 3 C2H2-type zinc fingers span residues 27–49 (YVCN…YLIH), 55–77 (FECD…QLTH), and 81–103 (FKCS…QQLH). Residues Lys112, Lys121, and Lys146 each participate in a glycyl lysine isopeptide (Lys-Gly) (interchain with G-Cter in SUMO2) cross-link. 3 C2H2-type zinc fingers span residues 160 to 182 (HACT…VLIH), 188 to 210 (FKCV…QLTH), and 216 to 238 (FQCC…KQIH). Lys262 participates in a covalent cross-link: Glycyl lysine isopeptide (Lys-Gly) (interchain with G-Cter in SUMO2). The C2H2-type 7; degenerate zinc-finger motif lies at 294–318 (FQCPKCEKCFESEQILNEHSCFPAR). Residues Lys420 and Lys437 each participate in a glycyl lysine isopeptide (Lys-Gly) (interchain with G-Cter in SUMO2) cross-link. 4 C2H2-type zinc fingers span residues 475 to 497 (CPCD…YLIH), 503 to 525 (FGCN…EQTH), 623 to 645 (YRCS…YLIH), and 651 to 673 (FECS…QLTH). A Glycyl lysine isopeptide (Lys-Gly) (interchain with G-Cter in SUMO2) cross-link involves residue Lys681.

It belongs to the krueppel C2H2-type zinc-finger protein family.

It is found in the nucleus. In terms of biological role, may be involved in transcriptional regulation. This chain is Zinc finger protein 770 (ZNF770), found in Pongo abelii (Sumatran orangutan).